The primary structure comprises 393 residues: Meiotic driver wtf19 (393 aa).

The disordered stretch occupies residues 1-98; that stretch reads MKNKYYPLRS…SSGTADNSST (98 aa). Basic and acidic residues predominate over residues 11-29; it reads SMDELSAKNDNEIDLEKGP. Composition is skewed to polar residues over residues 57 to 72 and 89 to 98; these read GANN…STTP and SSGTADNSST. The next 8 helical transmembrane spans lie at 104-124, 137-157, 167-187, 208-228, 233-253, 269-289, 296-316, and 332-352; these read AFLS…YLTY, WVYF…LWYF, VTVI…AQCV, CVKV…IGLF, EMMI…FGCV, CTIS…FWTF, LAKV…TMFL, and VLFI…GALI.

It belongs to the WTF family. As to quaternary structure, homomer. Forms protein aggregates. The two isoforms can interact with each other and with themselves. High sequence similarity is required for their interaction.

The protein resides in the spore membrane. Its subcellular location is the vacuole membrane. The protein localises to the ascus epiplasm. It is found in the cytoplasm. It localises to the endoplasmic reticulum membrane. Functionally, promotes unequal transmission of alleles from the parental zygote to progeny spores by acting as poison/antidote system where the poison and antidote proteins are produced from the same locus; the poison component is trans-acting and targets all spores within an ascus whereas the antidote component is spore-specific, leading to poisoning of all progeny that do not inherit the allele. Localizes isoform 2 to the vacuole thereby facilitating its degradation. Its function is as follows. Forms toxic aggregates that disrupt spore maturation. The polypeptide is Meiotic driver wtf19 (Schizosaccharomyces pombe (strain 972 / ATCC 24843) (Fission yeast)).